A 450-amino-acid chain; its full sequence is Phosphoglucosamine mutase (450 aa).

Serine 107 acts as the Phosphoserine intermediate in catalysis. Mg(2+) is bound by residues serine 107, aspartate 246, aspartate 248, and aspartate 250. The residue at position 107 (serine 107) is a Phosphoserine.

It belongs to the phosphohexose mutase family. Mg(2+) is required as a cofactor. Activated by phosphorylation.

It carries out the reaction alpha-D-glucosamine 1-phosphate = D-glucosamine 6-phosphate. In terms of biological role, catalyzes the conversion of glucosamine-6-phosphate to glucosamine-1-phosphate. This chain is Phosphoglucosamine mutase, found in Dechloromonas aromatica (strain RCB).